A 197-amino-acid polypeptide reads, in one-letter code: Protein-S-isoprenylcysteine O-methyltransferase A (197 aa).

The next 3 helical transmembrane spans lie at 16–36 (MLLSLIFFHISEYILAITIHG), 52–72 (ALAMLLSLLEYLTEIILFPGL), and 81–101 (FGLIMIIVGEIIRKAAIITAG). S-adenosyl-L-methionine is bound by residues 116 to 119 (HGLV), tyrosine 124, and 129 to 132 (HPSY). A helical transmembrane segment spans residues 140-160 (VGTQVMLCNPVSAVAFAVVVW). Residue arginine 166 coordinates substrate. Residue glutamate 170 participates in S-adenosyl-L-methionine binding.

Belongs to the class VI-like SAM-binding methyltransferase superfamily. Isoprenylcysteine carboxyl methyltransferase family. It depends on Zn(2+) as a cofactor. As to expression, expressed primarily in flowers, stems, leaves and roots. Almost not expressed in siliques. Detected in root tips and vascular tissues of roots, cotyledons, petiols, hypocotyls, filaments, pollen grains and the distal and proximal portions of the gynoecium.

The protein resides in the endoplasmic reticulum membrane. It catalyses the reaction [protein]-C-terminal S-[(2E,6E)-farnesyl]-L-cysteine + S-adenosyl-L-methionine = [protein]-C-terminal S-[(2E,6E)-farnesyl]-L-cysteine methyl ester + S-adenosyl-L-homocysteine. Its activity is regulated as follows. Inhibited by farnesylthioacetic acid (FTAA) and N-acetyl-S-trans, trans-farnesyl-l-cysteine (AFC). In terms of biological role, catalyzes the post-translational methylation of isoprenylated C-terminal cysteine residues, resulting in the modulation of the function of prenylated proteins. Involved in negative regulation of abscisic acid signaling. Carboxyl methylation is a reversible and potentially regulated step in the post-translational modification of prenylated proteins. The sequence is that of Protein-S-isoprenylcysteine O-methyltransferase A from Arabidopsis thaliana (Mouse-ear cress).